Here is a 118-residue protein sequence, read N- to C-terminus: Large ribosomal subunit protein uL18 (118 aa).

The protein belongs to the universal ribosomal protein uL18 family. In terms of assembly, part of the 50S ribosomal subunit; part of the 5S rRNA/L5/L18/L25 subcomplex. Contacts the 5S and 23S rRNAs.

Functionally, this is one of the proteins that bind and probably mediate the attachment of the 5S RNA into the large ribosomal subunit, where it forms part of the central protuberance. This is Large ribosomal subunit protein uL18 from Rickettsia bellii (strain OSU 85-389).